We begin with the raw amino-acid sequence, 114 residues long: BolA-like protein DDB_G0274169 (114 aa).

The segment covering 88–98 (TQWKKNNQTKI) has biased composition (polar residues). A disordered region spans residues 88–114 (TQWKKNNQTKINVDDDKSPSCKGGFGK).

The protein belongs to the BolA/IbaG family.

This Dictyostelium discoideum (Social amoeba) protein is BolA-like protein DDB_G0274169.